A 318-amino-acid polypeptide reads, in one-letter code: MPRLLSGDDIRRRPEASEMLDSLLATGGLVLLRDSVEWEGRGLLKALIKKSALRGEQVHVLGCEVSEEEFREGLGSDVNSRLVYHDLFRDPLNWSQPGEAAPEGPLKALRSMCRRTDRGSVTIALDSLSWLLCHIPCVTLCQALHALSQRNVDPGDNPLIEQVRVLGLLHEELHGPGPVGAVSSLAHTEVTLSGKMDQTSASILCRRPQQRATYQTWWFSILPDFSLDLHEGLPLHSELHRDPHTTQVDPASHLTFNLHLSKKEREAKDSLTLPFQFSSEKQQALLHPVPGQTTGRIFYEPDAFDDVDQEDPDDDLDI.

At serine 270 the chain carries Phosphoserine.

Belongs to the ELP5 family. As to quaternary structure, component of the elongator complex which consists of ELP1, ELP2, ELP3, ELP4, ELP5 and ELP6; in the complex, is required for optimal binding of ELP3 to ELP4. In terms of processing, tyrosine-phosphorylated.

It localises to the nucleus. The protein localises to the cytoplasm. It participates in tRNA modification; 5-methoxycarbonylmethyl-2-thiouridine-tRNA biosynthesis. Its function is as follows. Component of the elongator complex which is required for multiple tRNA modifications, including mcm5U (5-methoxycarbonylmethyl uridine), mcm5s2U (5-methoxycarbonylmethyl-2-thiouridine), and ncm5U (5-carbamoylmethyl uridine). The elongator complex catalyzes the formation of carboxymethyluridine in the wobble base at position 34 in tRNAs. Involved in cell migration. This chain is Elongator complex protein 5 (Elp5), found in Rattus norvegicus (Rat).